Here is a 476-residue protein sequence, read N- to C-terminus: Ribulose bisphosphate carboxylase large chain (476 aa).

Substrate is bound by residues Asn124 and Thr174. The active-site Proton acceptor is Lys176. Lys178 contributes to the substrate binding site. Residues Lys202, Asp204, and Glu205 each coordinate Mg(2+). Lys202 bears the N6-carboxylysine mark. His295 (proton acceptor) is an active-site residue. Arg296, His328, and Ser380 together coordinate substrate.

It belongs to the RuBisCO large chain family. Type I subfamily. Heterohexadecamer of 8 large chains and 8 small chains; disulfide-linked. The disulfide link is formed within the large subunit homodimers. It depends on Mg(2+) as a cofactor. In terms of processing, the disulfide bond which can form in the large chain dimeric partners within the hexadecamer appears to be associated with oxidative stress and protein turnover.

The protein resides in the carboxysome. The enzyme catalyses 2 (2R)-3-phosphoglycerate + 2 H(+) = D-ribulose 1,5-bisphosphate + CO2 + H2O. It catalyses the reaction D-ribulose 1,5-bisphosphate + O2 = 2-phosphoglycolate + (2R)-3-phosphoglycerate + 2 H(+). Its function is as follows. RuBisCO catalyzes two reactions: the carboxylation of D-ribulose 1,5-bisphosphate, the primary event in carbon dioxide fixation, as well as the oxidative fragmentation of the pentose substrate in the photorespiration process. Both reactions occur simultaneously and in competition at the same active site. The polypeptide is Ribulose bisphosphate carboxylase large chain (Cyanothece sp. (strain PCC 7425 / ATCC 29141)).